We begin with the raw amino-acid sequence, 134 residues long: Methylglyoxal synthase (134 aa).

Residues 1–134 (MHIALIAHDE…DWRDLRRNDE (134 aa)) enclose the MGS-like domain. Residues His-8, Lys-12, 34 to 37 (TGTT), and 54 to 55 (SG) contribute to the substrate site. The active-site Proton donor/acceptor is the Asp-60. Residue His-87 participates in substrate binding.

Belongs to the methylglyoxal synthase family.

It carries out the reaction dihydroxyacetone phosphate = methylglyoxal + phosphate. In terms of biological role, catalyzes the formation of methylglyoxal from dihydroxyacetone phosphate. The sequence is that of Methylglyoxal synthase from Listeria welshimeri serovar 6b (strain ATCC 35897 / DSM 20650 / CCUG 15529 / CIP 8149 / NCTC 11857 / SLCC 5334 / V8).